The sequence spans 695 residues: Potassium voltage-gated channel subfamily KQT member 4 (695 aa).

A disordered region spans residues 1–21 (MAEAPPRRLGLGPPPGDAPRA). The Cytoplasmic segment spans residues 1–96 (MAEAPPRRLG…VYNVLERPRG (96 aa)). Arginine 93 contributes to the a 1,2-diacyl-sn-glycero-3-phospho-(1D-myo-inositol-4,5-bisphosphate) binding site. The chain crosses the membrane as a helical span at residues 97–118 (WAFVYHVFIFLLVFSCLVLSVL). Topologically, residues 119 to 129 (STIQEHQELAN) are extracellular. The chain crosses the membrane as a helical span at residues 130-152 (ECLLILEFVMIVVFGLEYIIRVW). The Cytoplasmic segment spans residues 153–168 (SAGCCCRYRGWQGRFR). The helical transmembrane segment at 169–191 (FARKPFCVIDFIVFVASVAVIAA) threads the bilayer. Lysine 172 lines the a 1,2-diacyl-sn-glycero-3-phospho-(1D-myo-inositol-4,5-bisphosphate) pocket. Residues 192-202 (GTQGNIFATSA) lie on the Extracellular side of the membrane. A helical; Voltage-sensor transmembrane segment spans residues 203-223 (LRSMRFLQILRMVRMDRRGGT). A 1,2-diacyl-sn-glycero-3-phospho-(1D-myo-inositol-4,5-bisphosphate) is bound by residues arginine 219, arginine 220, lysine 225, and serine 235. Topologically, residues 224-235 (WKLLGSVVYAHS) are cytoplasmic. The helical transmembrane segment at 236–258 (KELITAWYIGFLVLIFASFLVYL) threads the bilayer. Residues 259–270 (AEKDANSDFSSY) are Extracellular-facing. Positions 271–292 (ADSLWWGTITLTTIGYGDKTPH) form an intramembrane region, pore-forming. A topological domain (extracellular) is located at residue threonine 293. A helical transmembrane segment spans residues 294–322 (WLGRVLAAGFALLGISFFALPAGILGSGF). Topologically, residues 323-695 (ALKVQEQHRQ…ISRSVSTNMD (373 aa)) are cytoplasmic. A 1,2-diacyl-sn-glycero-3-phospho-(1D-myo-inositol-4,5-bisphosphate) is bound by residues histidine 330 and lysine 333. Residues 342-351 (AANLIQAAWR) form an interaction with CALM region. The interval 441-483 (RMSSSQKRTGPSKQHLAPPPIPTSPSSEQVGEASSPSKVQKSW) is disordered. Polar residues-rich tracts occupy residues 442 to 452 (MSSSQKRTGPS) and 464 to 483 (SPSS…QKSW). The interval 535–549 (RSVRILKFLVAKRKF) is interaction with CALM. The tract at residues 546–650 (KRKFKETLRP…SRCLRSGTSA (105 aa)) is C-terminal assembly domain (tetramerization). A disordered region spans residues 588–608 (GRGPGDRKTREKGDKGPSDTE). Basic and acidic residues predominate over residues 591-605 (PGDRKTREKGDKGPS).

It belongs to the potassium channel family. KQT (TC 1.A.1.15) subfamily. Kv7.4/KCNQ4 sub-subfamily. As to quaternary structure, homotetramer. Interacts (via C-terminus) with calmodulin; forms a heterooctameric structure (with 4:4 KCNQ1:CALM stoichiometry); the interaction is calcium-independent, constitutive, participates in the proper assembly of a functional channel. The interaction with calcium-free CALM controls channel trafficking whereas interaction with calcium-bound CALM regulates channel gating. May form a functional heteromultimeric channel with KCNQ3. Interacts with HSP90AB1; promotes cell surface expression of KCNQ4. In terms of tissue distribution, expressed in both the inner (IHCs) and the outer hair cells (OHCs) of the cochlea. Reciprocal longitudinal gradients of expression is present in IHCs and OHCs. The strongest expression in IHCs is in the base of the cochlea and in the apex for OHCs. A basal to apical gradient of expression is also present in both type I and type II spiral ganglion cells.

It is found in the basal cell membrane. The catalysed reaction is K(+)(in) = K(+)(out). Two molecules of phosphatidylinositol-4,5-bisphosphate (PIP2-I and PIP2-II) are essential to activate KCNQ4 channel by inducing the coupling of the voltage-sensing domain (VSD) and the pore-forming domain (PD). Upon channel activation, PIP2-I and PIP2-II disrupt the VSD-calmodulin/CALM interaction, causing the release of CALM from the VSD which triggers the opening of the gate. Calcium suppresses KCNQ4 channel current through calcium-bound CALM C-terminus. Therefore CALM acts as calcium sensor that controls channel activity. Its function is as follows. Pore-forming subunit of the voltage-gated potassium (Kv) channel involved in the regulation of sensory cells excitability in the cochlea. KCNQ4/Kv7.4 channel is composed of 4 pore-forming subunits assembled as tetramers. Promotes the outflow of potassium ions in the repolarization phase of action potential which plays a role in regulating membrane potential of excitable cells. The channel conducts a slowly activating and deactivating current. Current often shows some inward rectification at positive potentials. Channel may be selectively permeable in vitro to other cations besides potassium, in decreasing order of affinity K(+) = Rb(+) &gt; Cs(+) &gt; Na(+). Important for normal physiological function of inner ear such as sensory perception of sound. This chain is Potassium voltage-gated channel subfamily KQT member 4, found in Rattus norvegicus (Rat).